Consider the following 400-residue polypeptide: Phosphoglycerate kinase (400 aa).

Residues 23–25, Arg-38, 61–64, Arg-120, and Arg-153 contribute to the substrate site; these read DLN and HFGR. Residues Lys-203, Glu-325, and 355–358 each bind ATP; that span reads GGDT.

This sequence belongs to the phosphoglycerate kinase family. Monomer.

Its subcellular location is the cytoplasm. It carries out the reaction (2R)-3-phosphoglycerate + ATP = (2R)-3-phospho-glyceroyl phosphate + ADP. It functions in the pathway carbohydrate degradation; glycolysis; pyruvate from D-glyceraldehyde 3-phosphate: step 2/5. The chain is Phosphoglycerate kinase from Methylorubrum extorquens (strain CM4 / NCIMB 13688) (Methylobacterium extorquens).